Consider the following 589-residue polypeptide: Zinc finger and BTB domain-containing protein 46 (589 aa).

Positions 31 to 99 (CDVCVVVEGK…MYSAHLALTS (69 aa)) constitute a BTB domain. The disordered stretch occupies residues 173–330 (RRTSPANSSG…ASSSDSRGER (158 aa)). A compositionally biased stretch (basic and acidic residues) spans 197-207 (GKEDQEPKADG). A Glycyl lysine isopeptide (Lys-Gly) (interchain with G-Cter in SUMO2) cross-link involves residue Lys229. Ser234 is modified (phosphoserine). Residues 305–325 (WPFSSRDSNADLSVTEASSSD) show a composition bias toward polar residues. 2 C2H2-type zinc fingers span residues 418–436 (FKCP…LKRH) and 446–468 (YPCE…TLVH). Residues 512–589 (PLDHGGGGGE…GPDKDFAWLS (78 aa)) are disordered. Residues 546–570 (EELGEDDEGLAPEDALLADDKDEED) show a composition bias toward acidic residues.

In terms of processing, sumoylated. Desumoylation by DESI1 reverses transcriptional repression activity.

The protein resides in the nucleus. In terms of biological role, functions as a transcriptional repressor for PRDM1. The sequence is that of Zinc finger and BTB domain-containing protein 46 (ZBTB46) from Homo sapiens (Human).